The chain runs to 222 residues: Tegument protein UL26 (222 aa).

Belongs to the herpesviridae US22 family. As to quaternary structure, interacts with UL25. Interacts with ISGylation machinery components ISG15, UBA7 and HERC5; these interactions inhibit global protein ISGylation. ISGylated; ISGylation regulates UL26 stability and inhibits its activities to suppress NF-kappa-B signaling.

It localises to the virion tegument. The protein resides in the host nucleus. Plays a role in the inhibition of host NF-kappa-B. This inhibition affects both the canonical and the non-canonical pathways. Blocks the induction of host IKK phosphorylation. May also influence the normal phosphorylation state of several tegument proteins including pp28 in virions. Also suppresses virus-induced ISGylation independent of its own ISGylation. The protein is Tegument protein UL26 (UL26) of Homo sapiens (Human).